The following is a 258-amino-acid chain: Small ribosomal subunit protein mS40 (258 aa).

The N-terminal 35 residues, 1-35 (MAASVLNTLLRRLPMLSLFRGAHRVQVPLQTLCTK), are a transit peptide targeting the mitochondrion. 2 positions are modified to phosphoserine: S38 and S49. Residues 218–258 (RLYQGHLREESGPPPESMPKMPPTAPAEASFTGQTDPQSAL) form a disordered region. Residues 229–242 (GPPPESMPKMPPTA) show a composition bias toward pro residues. Positions 248 to 258 (FTGQTDPQSAL) are enriched in polar residues.

Belongs to the bacterial ribosomal protein bS18 family. Mitochondrion-specific ribosomal protein mS40 subfamily. Component of the mitochondrial ribosome small subunit (28S) which comprises a 12S rRNA and about 30 distinct proteins.

It localises to the mitochondrion. This Macaca mulatta (Rhesus macaque) protein is Small ribosomal subunit protein mS40 (MRPS18B).